Here is a 266-residue protein sequence, read N- to C-terminus: Probable septum site-determining protein MinC (266 aa).

Low complexity predominate over residues 1–21 (MSEAESTPVEEPVVESTEGSE). Residues 1–28 (MSEAESTPVEEPVVESTEGSEAIPEVEQ) are disordered.

The protein belongs to the MinC family. In terms of assembly, interacts with MinD and FtsZ.

Functionally, cell division inhibitor that blocks the formation of polar Z ring septums. Rapidly oscillates between the poles of the cell to destabilize FtsZ filaments that have formed before they mature into polar Z rings. Prevents FtsZ polymerization. The sequence is that of Probable septum site-determining protein MinC from Thermosynechococcus vestitus (strain NIES-2133 / IAM M-273 / BP-1).